The sequence spans 539 residues: Phenylacetyl-CoA ligase epaB (539 aa).

188-199 is an AMP binding site; it reads RLFSSGTTGLPK. Residues 449–525 form an AMP-binding region; sequence EVEGVLRNHP…DAIPRNASGK (77 aa).

This sequence belongs to the ATP-dependent AMP-binding enzyme family.

The protein operates within secondary metabolite biosynthesis. Its function is as follows. Phenylacetyl-CoA ligase; part of the gene cluster that mediates the biosynthesis of nigerpyrone and its derivatives carbonarone A and pestalamide A. The biosynthesis pathway begins with the polyketide assembly by epaA to form phenylacetyl triketide precursor from successive condensation of two malonyl-CoA, presumably with one phenylacetyl-CoA starter unit produced by the phenylacetyl-CoA ligase epaB. For the nigerpyrone biosynthesis, the reactive polyketide chain is released as an aldehyde through the R-domain. A nonenzymatic cyclization and dehydration may create nigerpyrone. For the biosynthesis of carbonarone A and pestalamide A, an extra methyl group is added through the C-methyltransferase domain. Several further steps involving the dehydrogenase orf1, the cytochrome P450 monooxygenase orf2 and the FAD-dependent monooxygenase orf3 are required to form a carbonarone A precursor which is converted to carbonarone A via cyclization. The O-acetyltransferase epaC could catalyze the transfer of 2-methylsuccinyl-CoA, a common intermediate in the ethylmalonyl-CoA pathway, to generate the final product pestalamide A. This chain is Phenylacetyl-CoA ligase epaB, found in Aspergillus niger (strain ATCC MYA-4892 / CBS 513.88 / FGSC A1513).